Reading from the N-terminus, the 302-residue chain is NAD kinase 2 (302 aa).

Asp-79 serves as the catalytic Proton acceptor. Residues 79–80 (DG), 153–154 (NE), Asp-183, 194–199 (TAYSLS), Ala-218, and Asn-252 each bind NAD(+).

This sequence belongs to the NAD kinase family. The cofactor is a divalent metal cation.

Its subcellular location is the cytoplasm. It carries out the reaction NAD(+) + ATP = ADP + NADP(+) + H(+). In terms of biological role, involved in the regulation of the intracellular balance of NAD and NADP, and is a key enzyme in the biosynthesis of NADP. Catalyzes specifically the phosphorylation on 2'-hydroxyl of the adenosine moiety of NAD to yield NADP. This chain is NAD kinase 2, found in Prochlorococcus marinus subsp. pastoris (strain CCMP1986 / NIES-2087 / MED4).